Consider the following 376-residue polypeptide: Arabinogalactan endo-beta-1,4-galactanase (376 aa).

Residues 1–17 (MKKKILAATAILLAAIA) form the signal peptide. The active-site Proton donor is the Glu161. Glu270 serves as the catalytic Nucleophile. Ca(2+) contacts are provided by Asp281 and Asn285.

Belongs to the glycosyl hydrolase 53 family. Ca(2+) serves as cofactor.

It catalyses the reaction The enzyme specifically hydrolyzes (1-&gt;4)-beta-D-galactosidic linkages in type I arabinogalactans.. The sequence is that of Arabinogalactan endo-beta-1,4-galactanase (ganB) from Cellvibrio japonicus (strain Ueda107) (Pseudomonas fluorescens subsp. cellulosa).